The chain runs to 541 residues: Arginine--tRNA ligase (541 aa).

Positions 119–129 match the 'HIGH' region motif; the sequence is ANPTGPLHIGH.

Belongs to the class-I aminoacyl-tRNA synthetase family. Monomer.

It is found in the cytoplasm. The catalysed reaction is tRNA(Arg) + L-arginine + ATP = L-arginyl-tRNA(Arg) + AMP + diphosphate. The protein is Arginine--tRNA ligase of Helicobacter pylori (strain Shi470).